We begin with the raw amino-acid sequence, 822 residues long: Serine/threonine-protein kinase kin-29 (822 aa).

Residues 16–267 (YDVGRAIGKG…IQNVLQHRWM (252 aa)) form the Protein kinase domain. ATP contacts are provided by residues 22–30 (IGKGNFATV) and Lys-45. Asp-138 acts as the Proton acceptor in catalysis. Disordered stretches follow at residues 348 to 367 (EGTG…LSGK), 389 to 423 (LSSP…RQFG), and 577 to 602 (NPIP…WASP). Residues 394 to 406 (CDSDDSSNSDLCD) show a composition bias toward acidic residues.

Belongs to the protein kinase superfamily. CAMK Ser/Thr protein kinase family. SNF1 subfamily. Interacts with tax-6. The cofactor is Mg(2+). Autophosphorylated. Elevated cAMP levels appears to act via PKA to directly or indirectly phosphorylate multiple sites on kin-29 and inhibit function. In terms of tissue distribution, primarily neuronal, with additional expression in body wall muscle and hypodermal cells. Among neuronal cells, expressed in multiple sensory neurons and interneurons in the lateral, anterior, and lumbar ganglia, as well as in motor neurons in the ventral motor cord. Present in the AWB and AWC olfactory neurons.

It localises to the cytoplasm. The protein localises to the nucleus. It catalyses the reaction L-seryl-[protein] + ATP = O-phospho-L-seryl-[protein] + ADP + H(+). It carries out the reaction L-threonyl-[protein] + ATP = O-phospho-L-threonyl-[protein] + ADP + H(+). In terms of biological role, regulates chemoreceptor expression by phosphorylating the hda-4 class II histone deacetylase (HDAC) and inhibiting the gene repression functions of hda-4 and the mef-2 transcription factor, enabling the correct sensing and transduction of food signals. Role in determining body size, the dauer decision and serotonin-mediated egg laying. May modulate the Sma/Mab pathway and regulates development in the later larval stages. This Caenorhabditis elegans protein is Serine/threonine-protein kinase kin-29.